The chain runs to 217 residues: NAD(P)H-hydrate epimerase (217 aa).

In terms of domain architecture, YjeF N-terminal spans 1–217; that stretch reads MRAIENAAMA…VAVADIGLSS (217 aa). 48-52 lines the (6S)-NADPHX pocket; that stretch reads NNGGD. The K(+) site is built by Asn49 and Asp127. (6S)-NADPHX contacts are provided by residues 131–137 and Asp165; that span reads GIGQTRP. Thr168 is a binding site for K(+).

The protein belongs to the NnrE/AIBP family. The cofactor is K(+).

It carries out the reaction (6R)-NADHX = (6S)-NADHX. The catalysed reaction is (6R)-NADPHX = (6S)-NADPHX. Its function is as follows. Catalyzes the epimerization of the S- and R-forms of NAD(P)HX, a damaged form of NAD(P)H that is a result of enzymatic or heat-dependent hydration. This is a prerequisite for the S-specific NAD(P)H-hydrate dehydratase to allow the repair of both epimers of NAD(P)HX. The sequence is that of NAD(P)H-hydrate epimerase from Cereibacter sphaeroides (strain KD131 / KCTC 12085) (Rhodobacter sphaeroides).